The chain runs to 310 residues: Polyprenyl transferase ntnF (310 aa).

8 helical membrane passes run 30-50, 63-83, 110-130, 154-174, 185-205, 230-250, 255-275, and 286-306; these read HTPEGLSTASIGWLALFFYAI, FLGIFACYQITHGVFCMWNDI, AMVAFIIGLALSLGVTYAMLG, IWAPQAVLGLTMAACVLPPWV, LPASLFGAIFSWLVYLDLIYA, ACLTVLGALQIAFFAVAAFEA, FLWVFGIAVWAISVPWSILSL, and IFLVNAILGIYLAAVSGTDVW.

The protein belongs to the UbiA prenyltransferase family. Mg(2+) serves as cofactor.

It is found in the membrane. It participates in secondary metabolite biosynthesis; terpenoid biosynthesis. Functionally, olyprenyl transferase; part of the gene cluster that mediates the biosynthesis of the meroterpenoids nectripenoids A and B, as well as cochliquninone D and isocochliquninone E. The pathway probably begins with the HR-PKS ntnH that catalyzes two chain-extension steps to form a reduced triketide, which then primes the SAT domain in the NR-PKS ntnG to initiate three more cycles of extension to give a linear hexaketide corresponding to the polyketide part of nectripenoids. The FAD-dependent monooxygenase ntnJ then performs an oxidative decarboxylation at C11 of the ntnH/ntnG product, via an electrophilic aromatic hydroxylation with concomitant ipso-decarboxylation. The membrane-bound polyprenyl transferase ntnF then introduces a farnesyl group before the FAD-dependent monooxygenase ntnK functions as the first epoxidase on terminal C12'-C13' olefin, followed by a second epoxidation on C7'-C8' catalyzed by ntnA. The terpene cyclase/mutase ntnI then initiates the sequential tricyclic ring formation through protonation of the terminal epoxide and catalyzes the regioselective and stereoselective 6/6/6-tricyclic ring formation. The cytochrome P450 monooxygenase ntnM may then hydroxylate C1'. This chain is Polyprenyl transferase ntnF, found in Nectria sp.